Consider the following 138-residue polypeptide: Cysteine desulfuration protein SufE (138 aa).

Catalysis depends on C51, which acts as the Cysteine persulfide intermediate.

Belongs to the SufE family. In terms of assembly, homodimer. Interacts with SufS.

The protein resides in the cytoplasm. Its pathway is cofactor biosynthesis; iron-sulfur cluster biosynthesis. Its function is as follows. Participates in cysteine desulfuration mediated by SufS. Cysteine desulfuration mobilizes sulfur from L-cysteine to yield L-alanine and constitutes an essential step in sulfur metabolism for biosynthesis of a variety of sulfur-containing biomolecules. Functions as a sulfur acceptor for SufS, by mediating the direct transfer of the sulfur atom from the S-sulfanylcysteine of SufS, an intermediate product of cysteine desulfuration process. The protein is Cysteine desulfuration protein SufE of Salmonella choleraesuis (strain SC-B67).